Reading from the N-terminus, the 183-residue chain is CKLF-like MARVEL transmembrane domain-containing protein 6 (183 aa).

Methionine 1 carries the post-translational modification N-acetylmethionine. At 1 to 39 the chain is on the cytoplasmic side; that stretch reads MENGAVYSPTTEEDPGPARGPRSGLAAYFFMGRLPLLRR. Position 8 is a phosphoserine (serine 8). Residues 33–160 enclose the MARVEL domain; it reads RLPLLRRVLK…DFITMLYEKR (128 aa). A helical membrane pass occupies residues 40-60; the sequence is VLKGLQLLLSLLAFICEEVVS. Residues 61-67 lie on the Extracellular side of the membrane; the sequence is QCTLCGG. Residues 68 to 88 traverse the membrane as a helical segment; it reads LYFFEFVSCSAFLLSLLILIV. Residues 89-106 lie on the Cytoplasmic side of the membrane; the sequence is YCTPFYERVDTTKVKSSD. The helical transmembrane segment at 107-127 threads the bilayer; that stretch reads FYITLGTGCVFLLASIIFVST. The Extracellular segment spans residues 128–134; sequence HDRTSAE. A helical membrane pass occupies residues 135 to 155; sequence IAAIVFGFIASFMFLLDFITM. Residues 156-183 lie on the Cytoplasmic side of the membrane; sequence LYEKRQESQLRKPENTTRAEALTEPLNA. Threonine 171 bears the Phosphothreonine mark.

This sequence belongs to the chemokine-like factor family. In terms of assembly, interacts with PD-L1/CD274 (via transmembrane domain); the interaction is direct. Interacts with CMTM4. Interacts with CD58, ARG1, ENO1 and TMPO. As to expression, expressed in the leukocytes, placenta and testis.

The protein localises to the cell membrane. The protein resides in the early endosome membrane. It is found in the recycling endosome membrane. Functionally, master regulator of recycling and plasma membrane expression of PD-L1/CD274, an immune inhibitory ligand critical for immune tolerance to self and antitumor immunity. Associates with both constitutive and IFNG-induced PD-L1/CD274 at recycling endosomes, where it protects PD-L1/CD274 from being targeted for lysosomal degradation, likely by preventing its STUB1-mediated ubiquitination. May stabilize PD-L1/CD274 expression on antigen presenting cells and potentiates inhibitory signaling by PDCD1/CD279, its receptor on T-cells, ultimately triggering T-cell anergy. This Homo sapiens (Human) protein is CKLF-like MARVEL transmembrane domain-containing protein 6.